Consider the following 282-residue polypeptide: Snake venom serine protease BmSP (282 aa).

The signal sequence occupies residues 1–18 (MVLIGVLASLLILQLSYS). A propeptide spanning residues 19-56 (KSLDDGAKESAYDDEIQQSSWGNSTVNTTLTETVVIQL) is cleaved from the precursor. Residues asparagine 41 and asparagine 45 are each glycosylated (N-linked (GlcNAc...) asparagine). Positions 57-280 (IMGGSECYKS…YIDWIKGIIA (224 aa)) constitute a Peptidase S1 domain. Intrachain disulfides connect cysteine 63-cysteine 195, cysteine 82-cysteine 98, cysteine 174-cysteine 241, cysteine 206-cysteine 220, and cysteine 231-cysteine 256. Histidine 97 functions as the Charge relay system in the catalytic mechanism. Asparagine 135 carries N-linked (GlcNAc...) asparagine glycosylation. The active-site Charge relay system is the aspartate 142. Asparagine 149 and asparagine 153 each carry an N-linked (GlcNAc...) asparagine glycan. The Charge relay system role is filled by serine 235.

The protein belongs to the peptidase S1 family. Snake venom subfamily. As to quaternary structure, monomer. Expressed by the venom gland.

The protein resides in the secreted. Its function is as follows. Snake venom serine protease that may act in the hemostasis system of the prey. This chain is Snake venom serine protease BmSP, found in Bungarus multicinctus (Many-banded krait).